The following is a 144-amino-acid chain: Large ribosomal subunit protein uL15 (144 aa).

Residues 1–53 are disordered; it reads MRLNTLSPAQGAKQAPKRVGRGIGSGLGKTGGRGHKGQNSRTGGGVRRGFEGG. The span at 21-31 shows a compositional bias: gly residues; that stretch reads RGIGSGLGKTG.

This sequence belongs to the universal ribosomal protein uL15 family. As to quaternary structure, part of the 50S ribosomal subunit.

Its function is as follows. Binds to the 23S rRNA. This Hamiltonella defensa subsp. Acyrthosiphon pisum (strain 5AT) protein is Large ribosomal subunit protein uL15.